The chain runs to 90 residues: Probable Fe(2+)-trafficking protein (90 aa).

This sequence belongs to the Fe(2+)-trafficking protein family.

Could be a mediator in iron transactions between iron acquisition and iron-requiring processes, such as synthesis and/or repair of Fe-S clusters in biosynthetic enzymes. This is Probable Fe(2+)-trafficking protein from Herminiimonas arsenicoxydans.